The sequence spans 1011 residues: Retinoblastoma-related protein (1011 aa).

The tract at residues 1-22 (MSQASVDMEDVKPSISLPSDDG) is disordered. Residues 411–612 (TPVSTAMTTA…ERGSSMYNSL (202 aa)) form a domain A region. Residues 411–860 (TPVSTAMTTA…NEVFIPSVKP (450 aa)) are pocket. The segment at 613 to 729 (IVARPTLAAE…PAGGGETCAE (117 aa)) is spacer. The tract at residues 730 to 860 (TGINIFFNKI…NEVFIPSVKP (131 aa)) is domain B. Positions 872-903 (QKSKSSPEDSNNADSQIPGSPRLSPFPNLPDM) are disordered. Polar residues predominate over residues 873–889 (KSKSSPEDSNNADSQIP).

The protein belongs to the retinoblastoma protein (RB) family.

The protein localises to the nucleus. In terms of biological role, regulator of biological processes that recruits a histone deacetylase to control gene transcription. May play a role in the entry into mitosis, negatively regulating the cell proliferation. Formation of stable complexes with geminiviridae replication-associated proteins may create a cellular environment which favors viral DNA replication. The polypeptide is Retinoblastoma-related protein (Rb1) (Cocos nucifera (Coconut palm)).